A 51-amino-acid polypeptide reads, in one-letter code: HALDTPHFPQELTSALSKNICITFFSGMFKNVESVAEIFDSLGPSFKQDQA.

The protein belongs to the phospholipase A2 family. In terms of assembly, interacts with OTOL1.

It is found in the secreted. In terms of biological role, major protein of the otoconia, a calcium carbonate structure in the saccule and utricle of the ear. Together with OTOL1, acts as a scaffold for otoconia biomineralization: sequesters calcium and forms interconnecting fibrils between otoconia that are incorporated into the calcium crystal structure. Together with OTOL1, modulates calcite crystal morphology and growth kinetics. It is unlikely that this protein has phospholipase A2 activity. The sequence is that of Otoconin-90 (OC90) from Cavia porcellus (Guinea pig).